A 392-amino-acid chain; its full sequence is DNA-directed RNA polymerase subunit Rpo1C (392 aa).

The protein belongs to the RNA polymerase beta' chain family. In terms of assembly, part of the 13-subunit RNA polymerase complex.

It localises to the cytoplasm. It carries out the reaction RNA(n) + a ribonucleoside 5'-triphosphate = RNA(n+1) + diphosphate. DNA-dependent RNA polymerase (RNAP) catalyzes the transcription of DNA into RNA using the four ribonucleoside triphosphates as substrates. Forms part of the jaw domain. The polypeptide is DNA-directed RNA polymerase subunit Rpo1C (Saccharolobus solfataricus (strain ATCC 35092 / DSM 1617 / JCM 11322 / P2) (Sulfolobus solfataricus)).